The sequence spans 137 residues: Transcription antitermination protein NusB (137 aa).

It belongs to the NusB family.

Functionally, involved in transcription antitermination. Required for transcription of ribosomal RNA (rRNA) genes. Binds specifically to the boxA antiterminator sequence of the ribosomal RNA (rrn) operons. The sequence is that of Transcription antitermination protein NusB from Aeromonas hydrophila subsp. hydrophila (strain ATCC 7966 / DSM 30187 / BCRC 13018 / CCUG 14551 / JCM 1027 / KCTC 2358 / NCIMB 9240 / NCTC 8049).